An 801-amino-acid polypeptide reads, in one-letter code: K(+)-insensitive pyrophosphate-energized proton pump (801 aa).

The next 5 helical transmembrane spans lie at 27 to 47, 81 to 101, 109 to 129, 170 to 190, and 201 to 221; these read VIVMVIGVVALAALVVAGILV, TLGVFAVVVFFLLMLLPADDW, VFFLIGALFSATTGYTGMWLA, GVVGMFTVGLGLLGASCVVLV, and GFGLGAALIAMFMRVGGGIFT. Lys-222 is a substrate binding site. Mg(2+) contacts are provided by Asp-225, Asp-229, Asn-252, and Asp-255. 7 helical membrane-spanning segments follow: residues 261 to 281, 292 to 312, 328 to 348, 372 to 392, 406 to 426, 429 to 449, and 453 to 473; these read AGMAADLFESYAVTLVAALIL, AFPLIVPAIGVLTAMIGIFAV, GFFVSAVFSLALVAVAVYVYL, ILAMVAVAIGIVLAALIQQLT, IGKSSLTGAATVVLAGISVGL, AVYTALLIGLGVYGAFLLGGT, and LALFAVALAGTGLLTTVGVIV. Asp-483 lines the Mg(2+) pocket. 4 helical membrane-spanning segments follow: residues 515-535, 571-591, 641-661, and 663-683; these read AITKGIAIATAVLAASALFGS, VGLIAGAAVVFLFSGLAINAV, LLAVLAPIAIGFTLGVGALGA, and LAGAIGTGTLMAVFLANSGGA. Residues Asp-685, Asp-711, and Asp-715 each coordinate Ca(2+). Lys-718 lines the substrate pocket. The next 2 helical transmembrane spans lie at 724–744 and 754–774; these read AINPLLKVMNLVALLIAPAVV and LGVRIAIAVLSILVIVGAVYI.

It belongs to the H(+)-translocating pyrophosphatase (TC 3.A.10) family. K(+)-insensitive subfamily. As to quaternary structure, homodimer. Mg(2+) serves as cofactor.

Its subcellular location is the cell membrane. The enzyme catalyses diphosphate + H2O + H(+)(in) = 2 phosphate + 2 H(+)(out). Proton pump that utilizes the energy of pyrophosphate hydrolysis as the driving force for proton movement across the membrane. Generates a proton motive force. This Streptomyces avermitilis (strain ATCC 31267 / DSM 46492 / JCM 5070 / NBRC 14893 / NCIMB 12804 / NRRL 8165 / MA-4680) protein is K(+)-insensitive pyrophosphate-energized proton pump.